The following is a 172-amino-acid chain: Translation initiation factor IF-3 (172 aa).

Belongs to the IF-3 family. Monomer.

The protein localises to the cytoplasm. IF-3 binds to the 30S ribosomal subunit and shifts the equilibrium between 70S ribosomes and their 50S and 30S subunits in favor of the free subunits, thus enhancing the availability of 30S subunits on which protein synthesis initiation begins. The chain is Translation initiation factor IF-3 from Campylobacter curvus (strain 525.92).